We begin with the raw amino-acid sequence, 343 residues long: Follistatin (343 aa).

Positions 1 to 28 (MLNQRIHPGMLVLLMFLYHFMEDHTAQA) are cleaved as a signal peptide. The 74-residue stretch at 29-102 (GNCWLRQARN…TCENVDCGPG (74 aa)) folds into the TB domain. Disulfide bonds link Cys-31-Cys-54, Cys-41-Cys-87, Cys-55-Cys-90, Cys-94-Cys-105, Cys-99-Cys-115, Cys-117-Cys-149, Cys-121-Cys-142, and Cys-131-Cys-163. One can recognise a Follistatin-like 1 domain in the interval 93–116 (TCENVDCGPGKKCKMNKKNKPRCV). 3 Kazal-like domains span residues 99–165 (CGPG…KCKK), 185–240 (NAYC…KCIK), and 263–317 (RGRC…SCNS). N-linked (GlcNAc...) asparagine glycosylation occurs at Asn-123. Residues 166–189 (TCRDVLCPGSSTCVVDQTNNAYCV) enclose the Follistatin-like 2 domain. 3 disulfides stabilise this stretch: Cys-191–Cys-224, Cys-195–Cys-217, and Cys-206–Cys-238. A Follistatin-like 3 domain is found at 243-267 (SCEDIQCSAGKKCLWDFKVGRGRCA). 3 disulfide bridges follow: Cys-269–Cys-301, Cys-273–Cys-294, and Cys-283–Cys-315. Asn-287 carries an N-linked (GlcNAc...) asparagine glycan. The disordered stretch occupies residues 315-343 (CNSINEDPEEEEEDEDQDYSFPISSILEW). The span at 320 to 332 (EDPEEEEEDEDQD) shows a compositional bias: acidic residues.

In terms of assembly, monomer. As to expression, ciliary ganglion neurons. Levels are higher in the iris than the choroid.

The protein resides in the secreted. Its function is as follows. Binds directly to activin and functions as an activin antagonist. Inhibits activin A signaling in the iris and regulates somatostatin phenotype in ciliary ganglion neurons. Specific inhibitor of the biosynthesis and secretion of pituitary follicle stimulating hormone (FSH). This chain is Follistatin (FST), found in Gallus gallus (Chicken).